The chain runs to 247 residues: UPF0280 protein MmarC7_0482 (247 aa).

This sequence belongs to the UPF0280 family.

In Methanococcus maripaludis (strain C7 / ATCC BAA-1331), this protein is UPF0280 protein MmarC7_0482.